We begin with the raw amino-acid sequence, 276 residues long: Undecaprenyl-diphosphatase 2 (276 aa).

Transmembrane regions (helical) follow at residues 1–21 (MSLW…LFPV), 44–64 (QLLP…LWYF), 87–107 (GHLM…GLLL), 114–134 (VFHD…LLWV), 150–170 (MTFK…IPGF), 190–210 (AAEF…VLEL), 220–240 (LMDA…SVRF), and 251–271 (LASF…WFML).

This sequence belongs to the UppP family.

Its subcellular location is the cell inner membrane. It carries out the reaction di-trans,octa-cis-undecaprenyl diphosphate + H2O = di-trans,octa-cis-undecaprenyl phosphate + phosphate + H(+). In terms of biological role, catalyzes the dephosphorylation of undecaprenyl diphosphate (UPP). Confers resistance to bacitracin. This Burkholderia ambifaria (strain ATCC BAA-244 / DSM 16087 / CCUG 44356 / LMG 19182 / AMMD) (Burkholderia cepacia (strain AMMD)) protein is Undecaprenyl-diphosphatase 2.